Reading from the N-terminus, the 423-residue chain is Innexin eat-5 (423 aa).

4 consecutive transmembrane segments (helical) span residues 25–41, 102–122, 277–297, and 341–361; these read YYYS…TITA, PFIM…WSML, IFLF…FDSI, and HSIL…IILL.

The protein belongs to the pannexin family. In terms of assembly, heterooligomer of eat-5 and another innexin. In terms of tissue distribution, expressed in pharyngeal muscles.

Its subcellular location is the cell membrane. It is found in the cell junction. The protein localises to the gap junction. In terms of biological role, structural component of the gap junctions. Required for synchronized pharyngeal muscle contractions. This is Innexin eat-5 (eat-5) from Caenorhabditis elegans.